The chain runs to 275 residues: Hydroxyethylthiazole kinase (275 aa).

Substrate is bound at residue M50. ATP contacts are provided by R126 and S171. Residue A200 participates in substrate binding.

This sequence belongs to the Thz kinase family. The cofactor is Mg(2+).

It catalyses the reaction 5-(2-hydroxyethyl)-4-methylthiazole + ATP = 4-methyl-5-(2-phosphooxyethyl)-thiazole + ADP + H(+). It participates in cofactor biosynthesis; thiamine diphosphate biosynthesis; 4-methyl-5-(2-phosphoethyl)-thiazole from 5-(2-hydroxyethyl)-4-methylthiazole: step 1/1. In terms of biological role, catalyzes the phosphorylation of the hydroxyl group of 4-methyl-5-beta-hydroxyethylthiazole (THZ). The chain is Hydroxyethylthiazole kinase from Acinetobacter baumannii (strain SDF).